The chain runs to 443 residues: Ribosomal protein uS12 methylthiotransferase RimO (443 aa).

The region spanning proline 5 to alanine 116 is the MTTase N-terminal domain. Residues cysteine 14, cysteine 50, cysteine 79, cysteine 154, cysteine 158, and cysteine 161 each coordinate [4Fe-4S] cluster. Positions threonine 140–glutamine 370 constitute a Radical SAM core domain. The TRAM domain occupies glutamine 372 to serine 442.

Belongs to the methylthiotransferase family. RimO subfamily. [4Fe-4S] cluster is required as a cofactor.

It localises to the cytoplasm. It carries out the reaction L-aspartate(89)-[ribosomal protein uS12]-hydrogen + (sulfur carrier)-SH + AH2 + 2 S-adenosyl-L-methionine = 3-methylsulfanyl-L-aspartate(89)-[ribosomal protein uS12]-hydrogen + (sulfur carrier)-H + 5'-deoxyadenosine + L-methionine + A + S-adenosyl-L-homocysteine + 2 H(+). Functionally, catalyzes the methylthiolation of an aspartic acid residue of ribosomal protein uS12. This Acaryochloris marina (strain MBIC 11017) protein is Ribosomal protein uS12 methylthiotransferase RimO.